Consider the following 202-residue polypeptide: MLKSPYSGGHLEVIVGPMFSGKSEELIRRVTRALIARQRVQVFKPAVDDRYHESAVASHAGRTVGALAVGDVADIRAHLSGEAPLLQASAEMPDVIGIDEVQFFGPELVPLALELADAGVRVILAGLDLDFRAEPFGCMPDLLARAESVEKLTAICTQCGAPATRSQRLISGEPARFDDPVVLVGALESYEARCRLHHVVTR.

ATP-binding positions include 16-23 (GPMFSGKS) and 99-102 (DEVQ). Glu100 serves as the catalytic Proton acceptor. Zn(2+) contacts are provided by Cys156, Cys159, Cys194, and His197.

Belongs to the thymidine kinase family. In terms of assembly, homotetramer.

It is found in the cytoplasm. It carries out the reaction thymidine + ATP = dTMP + ADP + H(+). This chain is Thymidine kinase, found in Deinococcus deserti (strain DSM 17065 / CIP 109153 / LMG 22923 / VCD115).